Here is a 55-residue protein sequence, read N- to C-terminus: Large ribosomal subunit protein bL33 (55 aa).

Belongs to the bacterial ribosomal protein bL33 family.

In Nitrobacter hamburgensis (strain DSM 10229 / NCIMB 13809 / X14), this protein is Large ribosomal subunit protein bL33 (rpmG).